The primary structure comprises 375 residues: PTS system fructose-specific EIIC component (375 aa).

The PTS EIIC type-2 domain occupies 16–370 (VKEDLMTGVS…KPNFDAKMAA (355 aa)). Helical transmembrane passes span 24–44 (VSFM…GYAV), 68–88 (IGVA…AYAI), 93–113 (GLAP…LQAA), 122–142 (GSAG…GIVA), 160–180 (VLLI…FVLG), 203–223 (AILL…GPIN), 238–258 (VTAP…GLAL), 279–299 (VLLG…ADPA), 301–321 (VIPS…ALGV), and 340–360 (FMFI…ATAI).

The protein localises to the cell membrane. In terms of biological role, the phosphoenolpyruvate-dependent sugar phosphotransferase system (sugar PTS), a major carbohydrate active transport system, catalyzes the phosphorylation of incoming sugar substrates concomitantly with their translocation across the cell membrane. The enzyme II PtfABC PTS system is involved in fructose transport. The chain is PTS system fructose-specific EIIC component from Haloferax volcanii (strain ATCC 29605 / DSM 3757 / JCM 8879 / NBRC 14742 / NCIMB 2012 / VKM B-1768 / DS2) (Halobacterium volcanii).